Consider the following 149-residue polypeptide: D-aminoacyl-tRNA deacylase (149 aa).

The Gly-cisPro motif, important for rejection of L-amino acids motif lies at glycine 137–proline 138.

This sequence belongs to the DTD family. In terms of assembly, homodimer.

Its subcellular location is the cytoplasm. It catalyses the reaction glycyl-tRNA(Ala) + H2O = tRNA(Ala) + glycine + H(+). The enzyme catalyses a D-aminoacyl-tRNA + H2O = a tRNA + a D-alpha-amino acid + H(+). In terms of biological role, an aminoacyl-tRNA editing enzyme that deacylates mischarged D-aminoacyl-tRNAs. Also deacylates mischarged glycyl-tRNA(Ala), protecting cells against glycine mischarging by AlaRS. Acts via tRNA-based rather than protein-based catalysis; rejects L-amino acids rather than detecting D-amino acids in the active site. By recycling D-aminoacyl-tRNA to D-amino acids and free tRNA molecules, this enzyme counteracts the toxicity associated with the formation of D-aminoacyl-tRNA entities in vivo and helps enforce protein L-homochirality. The sequence is that of D-aminoacyl-tRNA deacylase from Janthinobacterium sp. (strain Marseille) (Minibacterium massiliensis).